The chain runs to 714 residues: GATA zinc finger domain-containing protein 10 (714 aa).

Disordered stretches follow at residues 28–97 (YIQQ…NKQI), 115–180 (TMPH…QQQQ), 266–362 (MPMN…QQQQ), 394–419 (QQQQ…ESMD), 454–476 (MHLQ…QQIQ), and 528–621 (IQQQ…RRRT). Composition is skewed to low complexity over residues 30 to 94 (QQQQ…NNNN) and 130 to 147 (QQQQ…QHPH). Over residues 148 to 168 (QQQHPHQQQHPHQQQHPHQQQ) the composition is skewed to basic residues. Low complexity predominate over residues 169–180 (HPHQQQIQQQQQ). Positions 271–282 (GGNSRKNSFDMY) are enriched in polar residues. Composition is skewed to low complexity over residues 283–322 (NNNN…NNNI) and 340–362 (QHQQ…QQQQ). Low complexity-rich tracts occupy residues 457–476 (QQQQ…QQIQ) and 528–549 (IQQQ…TPNN). A compositionally biased stretch (polar residues) spans 550 to 569 (GSPSSSDGKSPVNSNTAITS). Positions 570 to 588 (NNNNNNNNNNNNNNNNNNN) are enriched in low complexity. The segment at 631 to 656 (CHYCEVTETPEWRRGPDGDHTLCNAC) adopts a GATA-type zinc-finger fold. Residues 661 to 694 (AKSQKKLAREKELEKQKELEREKERENTRKHSID) adopt a coiled-coil conformation. Positions 667–693 (LAREKELEKQKELEREKERENTRKHSI) are enriched in basic and acidic residues. The disordered stretch occupies residues 667–714 (LAREKELEKQKELEREKERENTRKHSIDFMLMNDTSSAPTNSQNPTPN). Over residues 699–714 (NDTSSAPTNSQNPTPN) the composition is skewed to polar residues.

The chain is GATA zinc finger domain-containing protein 10 (gtaJ) from Dictyostelium discoideum (Social amoeba).